A 64-amino-acid polypeptide reads, in one-letter code: uncharacterized protein (64 aa).

It localises to the host cytoplasm. This is an uncharacterized protein from Enterobacteriaceae (Bacteriophage Mu).